Consider the following 44-residue polypeptide: Benzaldehyde dehydrogenase [NAD(+)] II (44 aa).

It belongs to the aldehyde dehydrogenase family.

It carries out the reaction benzaldehyde + NAD(+) + H2O = benzoate + NADH + 2 H(+). This is Benzaldehyde dehydrogenase [NAD(+)] II from Acinetobacter guillouiae (Acinetobacter genomosp. 11).